The following is a 445-amino-acid chain: Argininosuccinate synthase (445 aa).

Residues alanine 17–serine 25 and alanine 43 each bind ATP. An L-citrulline-binding site is contributed by tyrosine 99. The ATP site is built by glycine 129 and threonine 131. L-aspartate contacts are provided by threonine 131, asparagine 135, and aspartate 136. Asparagine 135 is a binding site for L-citrulline. Aspartate 136 is an ATP binding site. Residues arginine 139 and serine 192 each contribute to the L-citrulline site. Position 194 (aspartate 194) interacts with ATP. L-citrulline-binding residues include threonine 201, glutamate 203, and glutamate 280.

Belongs to the argininosuccinate synthase family. Type 2 subfamily. In terms of assembly, homotetramer.

Its subcellular location is the cytoplasm. It catalyses the reaction L-citrulline + L-aspartate + ATP = 2-(N(omega)-L-arginino)succinate + AMP + diphosphate + H(+). It functions in the pathway amino-acid biosynthesis; L-arginine biosynthesis; L-arginine from L-ornithine and carbamoyl phosphate: step 2/3. This chain is Argininosuccinate synthase, found in Burkholderia ambifaria (strain MC40-6).